A 176-amino-acid polypeptide reads, in one-letter code: Retinol-binding protein 4-A (176 aa).

S1 carries the post-translational modification N-acetylserine. Cystine bridges form between C3–C159, C69–C173, and C119–C128. Residue Q97 participates in substrate binding.

Belongs to the calycin superfamily. Lipocalin family.

It localises to the secreted. RBP delivers retinol from the liver stores to the peripheral tissues. In plasma, the RBP-retinol complex interacts with transthyretin, this prevents its loss by filtration through the kidney glomeruli. This chain is Retinol-binding protein 4-A (rbp4a), found in Oncorhynchus mykiss (Rainbow trout).